We begin with the raw amino-acid sequence, 243 residues long: Large ribosomal subunit protein uL2 (243 aa).

A compositionally biased stretch (basic residues) spans 1–12 (MGRRIQGQRRGR). Disordered regions lie at residues 1–38 (MGRRIQGQRRGRGTSTFRAPSHRYKAELSHKQSESDDT) and 198–243 (VDHP…GSSE). Basic and acidic residues-rich tracts occupy residues 24–34 (YKAELSHKQSE) and 221–231 (PPGRKVGDIAS).

The protein belongs to the universal ribosomal protein uL2 family. Part of the 50S ribosomal subunit. Forms a bridge to the 30S subunit in the 70S ribosome.

Functionally, one of the primary rRNA binding proteins. Required for association of the 30S and 50S subunits to form the 70S ribosome, for tRNA binding and peptide bond formation. It has been suggested to have peptidyltransferase activity; this is somewhat controversial. Makes several contacts with the 16S rRNA in the 70S ribosome. The protein is Large ribosomal subunit protein uL2 of Haloquadratum walsbyi (strain DSM 16790 / HBSQ001).